The chain runs to 267 residues: Protein LicA (267 aa).

This sequence belongs to the peptidase S49 family.

Functionally, mediates phase variation of the LPS epitopes. Phase variation of H.influenza LPS epitopes expressed by LicA is determined by a translational switch. This is Protein LicA (licA) from Haemophilus influenzae (strain ATCC 51907 / DSM 11121 / KW20 / Rd).